Reading from the N-terminus, the 40-residue chain is Photosystem II reaction center protein J (40 aa).

Residues Ile-8 to Phe-28 traverse the membrane as a helical segment.

It belongs to the PsbJ family. In terms of assembly, PSII is composed of 1 copy each of membrane proteins PsbA, PsbB, PsbC, PsbD, PsbE, PsbF, PsbH, PsbI, PsbJ, PsbK, PsbL, PsbM, PsbT, PsbX, PsbY, PsbZ, Psb30/Ycf12, at least 3 peripheral proteins of the oxygen-evolving complex and a large number of cofactors. It forms dimeric complexes.

It is found in the plastid. The protein localises to the chloroplast thylakoid membrane. Its function is as follows. One of the components of the core complex of photosystem II (PSII). PSII is a light-driven water:plastoquinone oxidoreductase that uses light energy to abstract electrons from H(2)O, generating O(2) and a proton gradient subsequently used for ATP formation. It consists of a core antenna complex that captures photons, and an electron transfer chain that converts photonic excitation into a charge separation. This Coffea arabica (Arabian coffee) protein is Photosystem II reaction center protein J.